The following is a 212-amino-acid chain: WAP four-disulfide core domain protein 1 (212 aa).

An N-terminal signal peptide occupies residues 1 to 26 (MGSCDRKALWALSFLLLLLGSSSVQG). The interval 43–62 (EEVAATGSRQPHADRCPPPP) is disordered. The 50-residue stretch at 51-100 (RQPHADRCPPPPRTLPPGACQATRCQSDSECPRHRRCCYNGCAYACLEAV) folds into the WAP domain. 4 disulfides stabilise this stretch: Cys58–Cys88, Cys70–Cys92, Cys75–Cys87, and Cys81–Cys96. Positions 191-212 (EYPEGDSKYVAEPGKGQQRHFP) are disordered.

Vascular smooth muscle and prostate. Periacinar ring.

It is found in the secreted. In terms of biological role, has growth inhibitory activity. The polypeptide is WAP four-disulfide core domain protein 1 (Wfdc1) (Rattus norvegicus (Rat)).